Consider the following 444-residue polypeptide: Spermidine/putrescine import ATP-binding protein PotA (444 aa).

Positions 11 to 332 (ISLVDVDKEF…PVNKWVANFI (322 aa)) constitute an ABC transporter domain. Residue 43–50 (GPSGSGKT) coordinates ATP. The interval 111-201 (RIKKKAEEIP…ESFKKKYLTR (91 aa)) is insert.

The protein belongs to the ABC transporter superfamily. Spermidine/putrescine importer (TC 3.A.1.11.1) family. In terms of assembly, the complex is composed of two ATP-binding proteins (PotA), two transmembrane proteins (PotB and PotC) and a solute-binding protein (PotD).

The protein localises to the cell membrane. The enzyme catalyses ATP + H2O + polyamine-[polyamine-binding protein]Side 1 = ADP + phosphate + polyamineSide 2 + [polyamine-binding protein]Side 1.. Part of the ABC transporter complex PotABCD involved in spermidine/putrescine import. Responsible for energy coupling to the transport system. In Mesomycoplasma hyopneumoniae (strain 232) (Mycoplasma hyopneumoniae), this protein is Spermidine/putrescine import ATP-binding protein PotA.